The sequence spans 142 residues: Large ribosomal subunit protein uL11 (142 aa).

It belongs to the universal ribosomal protein uL11 family. As to quaternary structure, part of the ribosomal stalk of the 50S ribosomal subunit. Interacts with L10 and the large rRNA to form the base of the stalk. L10 forms an elongated spine to which L12 dimers bind in a sequential fashion forming a multimeric L10(L12)X complex. Post-translationally, one or more lysine residues are methylated.

Functionally, forms part of the ribosomal stalk which helps the ribosome interact with GTP-bound translation factors. This Mycobacterium leprae (strain Br4923) protein is Large ribosomal subunit protein uL11.